We begin with the raw amino-acid sequence, 182 residues long: Probable chorismate pyruvate-lyase (182 aa).

Substrate is bound by residues R81, L119, and E171.

This sequence belongs to the UbiC family.

Its subcellular location is the cytoplasm. It catalyses the reaction chorismate = 4-hydroxybenzoate + pyruvate. It functions in the pathway cofactor biosynthesis; ubiquinone biosynthesis. Functionally, removes the pyruvyl group from chorismate, with concomitant aromatization of the ring, to provide 4-hydroxybenzoate (4HB) for the ubiquinone pathway. The sequence is that of Probable chorismate pyruvate-lyase from Pseudomonas putida (Arthrobacter siderocapsulatus).